A 361-amino-acid chain; its full sequence is [LysW]-lysine hydrolase (361 aa).

A Zn(2+)-binding site is contributed by His67. Asp69 is an active-site residue. Asp91 is a Zn(2+) binding site. Glu124 (proton acceptor) is an active-site residue. 3 residues coordinate Zn(2+): Glu125, Glu148, and His326.

Belongs to the peptidase M20A family. LysK subfamily. It depends on Zn(2+) as a cofactor. The cofactor is Co(2+).

It is found in the cytoplasm. The catalysed reaction is [amino-group carrier protein]-C-terminal-gamma-(L-lysyl)-L-glutamate + H2O = [amino-group carrier protein]-C-terminal-L-glutamate + L-lysine. Its pathway is amino-acid biosynthesis; L-lysine biosynthesis via AAA pathway; L-lysine from L-alpha-aminoadipate (Thermus route): step 5/5. Catalyzes the release of L-lysine from [LysW]-gamma-L-lysine. The chain is [LysW]-lysine hydrolase from Thermus thermophilus (strain ATCC 27634 / DSM 579 / HB8).